The sequence spans 272 residues: Regulatory protein RecX (272 aa).

The protein belongs to the RecX family.

The protein resides in the cytoplasm. Modulates RecA activity. In Staphylococcus aureus (strain Newman), this protein is Regulatory protein RecX.